We begin with the raw amino-acid sequence, 322 residues long: Probable heme-iron transport system permease protein IsdF (322 aa).

A run of 9 helical transmembrane segments spans residues 9-29 (LLFL…FVTG), 61-81 (ILIA…LQAA), 89-109 (ANII…MLFI), 114-134 (FYLP…IILL), 143-163 (VSMI…LEIL), 179-199 (IWSD…LTLL), 233-253 (VFLA…GIIV), 267-287 (VLIP…DLLG), and 294-314 (LEIP…IYLI).

Belongs to the binding-protein-dependent transport system permease family. FecCD subfamily.

It localises to the cell membrane. Part of the binding-protein-dependent transport system for heme-iron. Responsible for the translocation of the substrate across the membrane. This Staphylococcus aureus (strain Mu3 / ATCC 700698) protein is Probable heme-iron transport system permease protein IsdF (isdF).